Here is a 156-residue protein sequence, read N- to C-terminus: Small ribosomal subunit protein uS7 (156 aa).

Belongs to the universal ribosomal protein uS7 family. Part of the 30S ribosomal subunit. Contacts proteins S9 and S11.

Its function is as follows. One of the primary rRNA binding proteins, it binds directly to 16S rRNA where it nucleates assembly of the head domain of the 30S subunit. Is located at the subunit interface close to the decoding center, probably blocks exit of the E-site tRNA. In Photobacterium profundum (strain SS9), this protein is Small ribosomal subunit protein uS7.